The primary structure comprises 84 residues: MPLARDLLHPSLEEEKKKHKKKRLVQSPNSYFMDVKCPGCYKITTVFSHAQTVVLCVGCSTVLCQPTGGKARLTEGCSFRRKQH.

Residues 1 to 16 (MPLARDLLHPSLEEEK) show a composition bias toward basic and acidic residues. Positions 1–23 (MPLARDLLHPSLEEEKKKHKKKR) are disordered. The C4-type zinc-finger motif lies at 38-60 (PGCYKITTVFSHAQTVVLCVGCS).

It belongs to the eukaryotic ribosomal protein eS27 family. Zn(2+) serves as cofactor.

This is Small ribosomal subunit protein eS27-like from Mus musculus (Mouse).